A 608-amino-acid chain; its full sequence is Endo-1,4-beta-xylanase C (608 aa).

Residues 1-25 (MKTFSVTKSSVVFAMALGMASTAFA) form the signal peptide. Residues 40-250 (TITSNQTGKI…VNGEVRGGHM (211 aa)) form the GH11 1 domain. Glu-142 functions as the Nucleophile in the catalytic mechanism. Residue Glu-237 is the Proton donor of the active site. Over residues 263-294 (SDPVSSSSVKSSSSTDAPKSSSSKGNGNVSGK) the composition is skewed to low complexity. The interval 263 to 296 (SDPVSSSSVKSSSSTDAPKSSSSKGNGNVSGKID) is disordered. A GH11 2 domain is found at 316-514 (NSSVTGNVGS…GSGSFDVTYF (199 aa)). Residue Glu-409 is the Nucleophile of the active site. The active-site Proton donor is Glu-501. The interval 520 to 539 (AHPLAQPEPESSSSEAKVES) is disordered. Residues 527 to 539 (EPESSSSEAKVES) are compositionally biased toward low complexity.

The protein belongs to the glycosyl hydrolase 11 (cellulase G) family.

It catalyses the reaction Endohydrolysis of (1-&gt;4)-beta-D-xylosidic linkages in xylans.. It functions in the pathway glycan degradation; xylan degradation. In terms of biological role, cleaves xylans with the production of xylose, xylobiose and xylo-oligosaccharides. The polypeptide is Endo-1,4-beta-xylanase C (xynC) (Fibrobacter succinogenes (strain ATCC 19169 / S85)).